Reading from the N-terminus, the 292-residue chain is VVGEGRGALGGAATMLRSLLLHSLRLCAQTASCLVLFPRFLGTAFMLWLLDFLCIRKHLLGRRRRGQPEIEVELNSDGEEVPPDDPPVCVSDDNRLCTLASLRAVWHGQKLDFFKQAHEGGPAPNSEVVLPDGFQNQHILDYARGNRPLVLNFGSCTUPPFMARMSAFQRLVTKYQRDVDFLIIYIEEAHPSDGWVTTDSPYSIPQHRSLEDRVSAARVLQQGAPECALVLDTMTNSSSSAYGAYFERLYIIQSGTIMYQGGRGPDGYQVSELRTWLERYDEQLHGPQPRRV.

At 1–30 (VVGEGRGALGGAATMLRSLLLHSLRLCAQT) the chain is on the cytoplasmic side. The chain crosses the membrane as a helical; Signal-anchor for type II membrane protein span at residues 31-50 (ASCLVLFPRFLGTAFMLWLL). At 51 to 292 (DFLCIRKHLL…QLHGPQPRRV (242 aa)) the chain is on the extracellular side. The active site involves selenocysteine 158. Selenocysteine 158 is a non-standard amino acid (selenocysteine).

Belongs to the iodothyronine deiodinase family. Monomer. Homodimer. May undergo minor heretodimerization with DIO1 and DIO2.

The protein resides in the cell membrane. It is found in the endosome membrane. It catalyses the reaction 3,3',5'-triiodo-L-thyronine + iodide + A + H(+) = L-thyroxine + AH2. The catalysed reaction is 3,3'-diiodo-L-thyronine + iodide + A + H(+) = 3,3',5-triiodo-L-thyronine + AH2. It carries out the reaction 3-iodo-L-thyronine + iodide + A + H(+) = 3,5-diiodo-L-thyronine + AH2. The enzyme catalyses L-thyronine + iodide + A + H(+) = 3-iodo-L-thyronine + AH2. It catalyses the reaction 3',5'-diiodo-L-thyronine + iodide + A + H(+) = 3,3',5'-triiodo-L-thyronine + AH2. The catalysed reaction is 3'-iodo-L-thyronine + iodide + A + H(+) = 3,3'-diiodo-L-thyronine + AH2. It carries out the reaction 3,3',5'-triiodothyronamine + iodide + A + H(+) = 3,3',5,5'-tetraiodothyronamine + AH2. The enzyme catalyses 3',5'-diiodothyronamine + iodide + A + H(+) = 3,3',5'-triiodothyronamine + AH2. It catalyses the reaction 3,3'-diiodothyronamine + iodide + A + H(+) = 3,3',5-triiodothyronamine + AH2. The catalysed reaction is 3-iodothyronamine + iodide + A + H(+) = 3,5-diiodothyronamine + AH2. It carries out the reaction 3'-iodothyronamine + iodide + A + H(+) = 3,3'-diiodothyronamine + AH2. The enzyme catalyses thyronamine + iodide + A + H(+) = 3-iodothyronamine + AH2. In terms of biological role, plays a crucial role in the metabolism of thyroid hormones (TH) and has specific roles in TH activation and inactivation by deiodination.Catalyzes the deiodination of L-thyroxine (T4) to 3,3',5'-triiodothyronine (rT3), 3,5,3'-triiodothyronine (T3) to 3,3'-diiodothyronine (3,3'-T2), 3,5-diiodothyronine (3,5-T2) to 3-monoiodothyronine (3-T1), rT3 to 3',5'-diiodothyronine (3',5'-T2) and 3,3'-T2 to 3'-monoiodothyronine (3'-T1) via inner-ring deiodination (IRD). Catalyzes the deiodination of 3-T1 to L-thyronine (T0) via outer-ring deiodination (ORD). Catalyzes the tyrosyl ring deiodinations of 3,3',5,5'-tetraiodothyronamine, 3,3',5'-triiodothyronamine, 3,5,3'-triiodothyronamine, 3,5-diiodothyronamine, 3,3'-diiodothyronamine and 3-iodothyronamine. The chain is Thyroxine 5-deiodinase (DIO3) from Ovis aries (Sheep).